We begin with the raw amino-acid sequence, 458 residues long: Bifunctional protein GlmU (458 aa).

A pyrophosphorylase region spans residues 1 to 230 (MLQVDVVILA…DWEVSGVNDK (230 aa)). UDP-N-acetyl-alpha-D-glucosamine is bound by residues 9–12 (LAAG), Lys-23, Gln-75, and 80–81 (GT). Asp-104 contributes to the Mg(2+) binding site. 4 residues coordinate UDP-N-acetyl-alpha-D-glucosamine: Gly-139, Glu-155, Asn-170, and Asn-228. Mg(2+) is bound at residue Asn-228. The linker stretch occupies residues 231–251 (IQLSILERAHQQDTANRLMEQ). Residues 252–458 (GVMFADPARF…NWKRPRKDRN (207 aa)) form an N-acetyltransferase region. The UDP-N-acetyl-alpha-D-glucosamine site is built by Arg-334 and Lys-352. His-364 (proton acceptor) is an active-site residue. UDP-N-acetyl-alpha-D-glucosamine-binding residues include Tyr-367 and Asn-378. Acetyl-CoA contacts are provided by residues Ala-381, 387 to 388 (NY), Ser-406, Ala-424, and Arg-441.

It in the N-terminal section; belongs to the N-acetylglucosamine-1-phosphate uridyltransferase family. In the C-terminal section; belongs to the transferase hexapeptide repeat family. Homotrimer. Requires Mg(2+) as cofactor.

The protein localises to the cytoplasm. It catalyses the reaction alpha-D-glucosamine 1-phosphate + acetyl-CoA = N-acetyl-alpha-D-glucosamine 1-phosphate + CoA + H(+). The enzyme catalyses N-acetyl-alpha-D-glucosamine 1-phosphate + UTP + H(+) = UDP-N-acetyl-alpha-D-glucosamine + diphosphate. It participates in nucleotide-sugar biosynthesis; UDP-N-acetyl-alpha-D-glucosamine biosynthesis; N-acetyl-alpha-D-glucosamine 1-phosphate from alpha-D-glucosamine 6-phosphate (route II): step 2/2. The protein operates within nucleotide-sugar biosynthesis; UDP-N-acetyl-alpha-D-glucosamine biosynthesis; UDP-N-acetyl-alpha-D-glucosamine from N-acetyl-alpha-D-glucosamine 1-phosphate: step 1/1. Its pathway is bacterial outer membrane biogenesis; LPS lipid A biosynthesis. Its function is as follows. Catalyzes the last two sequential reactions in the de novo biosynthetic pathway for UDP-N-acetylglucosamine (UDP-GlcNAc). The C-terminal domain catalyzes the transfer of acetyl group from acetyl coenzyme A to glucosamine-1-phosphate (GlcN-1-P) to produce N-acetylglucosamine-1-phosphate (GlcNAc-1-P), which is converted into UDP-GlcNAc by the transfer of uridine 5-monophosphate (from uridine 5-triphosphate), a reaction catalyzed by the N-terminal domain. This chain is Bifunctional protein GlmU, found in Nitrosomonas europaea (strain ATCC 19718 / CIP 103999 / KCTC 2705 / NBRC 14298).